The primary structure comprises 139 residues: Holo-[acyl-carrier-protein] synthase (139 aa).

Mg(2+)-binding residues include D8 and E57.

This sequence belongs to the P-Pant transferase superfamily. AcpS family. Requires Mg(2+) as cofactor.

It localises to the cytoplasm. It carries out the reaction apo-[ACP] + CoA = holo-[ACP] + adenosine 3',5'-bisphosphate + H(+). Its function is as follows. Transfers the 4'-phosphopantetheine moiety from coenzyme A to a Ser of acyl-carrier-protein. This Dinoroseobacter shibae (strain DSM 16493 / NCIMB 14021 / DFL 12) protein is Holo-[acyl-carrier-protein] synthase.